A 225-amino-acid polypeptide reads, in one-letter code: Platelet-derived growth factor subunit B (225 aa).

An N-terminal signal peptide occupies residues 1 to 12 (LPLCCYLRLVSA). Positions 13-73 (EGDPIPEELY…ESESSSRGRR (61 aa)) are cleaved as a propeptide — removed in mature form. An N-linked (GlcNAc...) asparagine glycan is attached at Asn55. 3 disulfide bridges follow: Cys89-Cys133, Cys122-Cys170, and Cys126-Cys172. Positions 183 to 225 (RSPGTSREHRAKTPQTRVTVRTVRIRRPPKGKHRKFKHTHDKK) are cleaved as a propeptide — removed in mature form.

It belongs to the PDGF/VEGF growth factor family. As to quaternary structure, antiparallel homodimer; disulfide-linked. Antiparallel heterodimer with PDGFA; disulfide-linked. The PDGFB homodimer interacts with PDGFRA and PDGFRB homodimers, and with heterodimers formed by PDGFRA and PDGFRB. The heterodimer composed of PDGFA and PDGFB interacts with PDGFRB homodimers, and with heterodimers formed by PDGFRA and PDGFRB. Interacts with XLKD1. Interacts with LRP1. Interacts with SORL1 (via the N-terminal ectodomain). Interacts with CD82; this interaction inhibits PDGFB-mediated signaling pathway. In terms of tissue distribution, expressed in a distinct subpopulation of smooth muscle cells in injured arteries.

The protein localises to the secreted. Growth factor that plays an essential role in the regulation of embryonic development, cell proliferation, cell migration, survival and chemotaxis. Potent mitogen for cells of mesenchymal origin. Required for normal proliferation and recruitment of pericytes and vascular smooth muscle cells in the central nervous system, skin, lung, heart and placenta. Required for normal blood vessel development, and for normal development of kidney glomeruli. Plays an important role in wound healing. Signaling is modulated by the formation of heterodimers with PDGFA. In Rattus norvegicus (Rat), this protein is Platelet-derived growth factor subunit B (Pdgfb).